A 297-amino-acid polypeptide reads, in one-letter code: UBX domain-containing protein 1 (297 aa).

An N-acetylalanine modification is found at alanine 2. One can recognise a UBA domain in the interval 2–42; that stretch reads AELTALESLIEMGFPKGRAEKALALTGNQGIEAAMDWLMEH. Positions 40 to 210 are disordered; sequence MEHEDDPDVD…PSREPPTKRE (171 aa). The segment at 43–297 is interaction with BRCA1; it reads EDDPDVDEPL…VLIVAKKCPG (255 aa). Composition is skewed to basic and acidic residues over residues 86–122 and 137–177; these read LTEE…ERER and RLQE…ERAK. A coiled-coil region spans residues 86 to 176; it reads LTEEERQEQT…KIERDKAERA (91 aa). A compositionally biased stretch (pro residues) spans 187–199; the sequence is PSPPATEPGPVPS. Phosphoserine is present on serine 199. A Phosphoserine; by MAPK12 modification is found at serine 200. Residues threonine 207 and threonine 229 each carry the phosphothreonine modification. The region spanning 209–291 is the UBX domain; it reads REYDQCRIQV…GLVPSAVLIV (83 aa). Residue serine 270 is modified to Phosphoserine.

In terms of assembly, component of a complex required to couple retrotranslocation, ubiquitination and deglycosylation composed of NGLY1, SAKS1, AMFR, VCP and RAD23B. Interacts with HOMER2. Interacts directly with VCP. Interacts with BRCA1 and BARD1; interaction takes place when BRCA1 is not autoubiquitinated bur is strongly enhanced in the presence of autoubiquitinated BRCA1.

It is found in the cytoplasm. Ubiquitin-binding protein that interacts with the BRCA1-BARD1 heterodimer, and regulates its activity. Specifically binds 'Lys-6'-linked polyubiquitin chains. Interaction with autoubiquitinated BRCA1, leads to inhibit the E3 ubiquitin-protein ligase activity of the BRCA1-BARD1 heterodimer. Component of a complex required to couple deglycosylation and proteasome-mediated degradation of misfolded proteins in the endoplasmic reticulum that are retrotranslocated in the cytosol. This is UBX domain-containing protein 1 (UBXN1) from Bos taurus (Bovine).